The sequence spans 251 residues: Pyridoxine 5'-phosphate synthase (251 aa).

Residue asparagine 7 participates in 3-amino-2-oxopropyl phosphate binding. 9–10 contributes to the 1-deoxy-D-xylulose 5-phosphate binding site; sequence DH. Arginine 18 contributes to the 3-amino-2-oxopropyl phosphate binding site. The active-site Proton acceptor is the histidine 43. Positions 45 and 50 each coordinate 1-deoxy-D-xylulose 5-phosphate. Glutamate 70 serves as the catalytic Proton acceptor. Threonine 100 provides a ligand contact to 1-deoxy-D-xylulose 5-phosphate. Histidine 198 serves as the catalytic Proton donor. 3-amino-2-oxopropyl phosphate contacts are provided by residues alanine 199 and 220–221; that span reads GH.

This sequence belongs to the PNP synthase family. As to quaternary structure, homooctamer; tetramer of dimers.

It localises to the cytoplasm. It catalyses the reaction 3-amino-2-oxopropyl phosphate + 1-deoxy-D-xylulose 5-phosphate = pyridoxine 5'-phosphate + phosphate + 2 H2O + H(+). The protein operates within cofactor biosynthesis; pyridoxine 5'-phosphate biosynthesis; pyridoxine 5'-phosphate from D-erythrose 4-phosphate: step 5/5. Catalyzes the complicated ring closure reaction between the two acyclic compounds 1-deoxy-D-xylulose-5-phosphate (DXP) and 3-amino-2-oxopropyl phosphate (1-amino-acetone-3-phosphate or AAP) to form pyridoxine 5'-phosphate (PNP) and inorganic phosphate. In Dechloromonas aromatica (strain RCB), this protein is Pyridoxine 5'-phosphate synthase.